We begin with the raw amino-acid sequence, 307 residues long: NADH-ubiquinone oxidoreductase chain 2 (307 aa).

Transmembrane regions (helical) follow at residues 1–21, 25–45, 58–78, 88–108, 119–139, 144–164, 193–213, 217–237, 250–270, and 287–307; these read MTLQ…LSMT, WIII…YYML, YFLI…YIFV, FIFI…FWII, IGIV…HMGC, MLNL…LIGM, LFKY…FLYL, MSIS…LFIG, LWFI…VYYL, and HYKM…LFLT.

This sequence belongs to the complex I subunit 2 family.

Its subcellular location is the mitochondrion inner membrane. It catalyses the reaction a ubiquinone + NADH + 5 H(+)(in) = a ubiquinol + NAD(+) + 4 H(+)(out). Core subunit of the mitochondrial membrane respiratory chain NADH dehydrogenase (Complex I) that is believed to belong to the minimal assembly required for catalysis. Complex I functions in the transfer of electrons from NADH to the respiratory chain. The immediate electron acceptor for the enzyme is believed to be ubiquinone. The sequence is that of NADH-ubiquinone oxidoreductase chain 2 (ND2) from Albinaria caerulea (Land snail).